Consider the following 466-residue polypeptide: MSIASVASVFKGEHAVGSKVTVRGWVRTRRDSKAGISFLAVYDGSCFNPIQGVVPNSLDNYDNEVLKLTAGCSVVMTGDVVESPGAGQAFELQVTDIEVAGWVDDPDTYPMAAKRHSIEHLRELAHLRPRTNIIGAVARVRNCLSQAIHRFYHEEGFIWVSTPLITASDCEGAGEMFRVSTLDMENLPRTEAGKVDYDKDFFGKEAFLTVSGQLNAETYACALSKVYTFGPTFRAENSNTSRHLAEFWMVEPEVAFANLNDIAGLAEAMLKYAFNAVLTERMDDLTFFAQHVDKTVIDRLQSFVSSDFAQVDYTDAVEILQNCGRTFEFPVSWGIDLSSEHERYLAEEHFKAPVVVKNYPKDIKAFYMRLNDDGKTVAAMDVLAPGIGEIIGGSQREERLDVLDMRLAEMDLNQEDYWWYRDMRRYGTVPHAGFGLGFERLVSYVTGVNNIRDVIPFPRAPRTANF.

The protein belongs to the class-II aminoacyl-tRNA synthetase family. In terms of assembly, homodimer.

The protein resides in the cytoplasm. The enzyme catalyses tRNA(Asn) + L-asparagine + ATP = L-asparaginyl-tRNA(Asn) + AMP + diphosphate + H(+). The protein is Asparagine--tRNA ligase of Shewanella baltica (strain OS185).